The primary structure comprises 89 residues: Small ribosomal subunit protein uS15 (89 aa).

It belongs to the universal ribosomal protein uS15 family. In terms of assembly, part of the 30S ribosomal subunit. Forms a bridge to the 50S subunit in the 70S ribosome, contacting the 23S rRNA.

Functionally, one of the primary rRNA binding proteins, it binds directly to 16S rRNA where it helps nucleate assembly of the platform of the 30S subunit by binding and bridging several RNA helices of the 16S rRNA. Forms an intersubunit bridge (bridge B4) with the 23S rRNA of the 50S subunit in the ribosome. This chain is Small ribosomal subunit protein uS15, found in Acaryochloris marina (strain MBIC 11017).